A 322-amino-acid polypeptide reads, in one-letter code: Undecaprenyl-phosphate 4-deoxy-4-formamido-L-arabinose transferase (322 aa).

Topologically, residues 1-235 are cytoplasmic; that stretch reads MFEIHPVKKV…TCLTTTPLRM (235 aa). Residues 236–256 traverse the membrane as a helical segment; the sequence is LSLLGSIIAIGGFSIAVLLVI. The Periplasmic portion of the chain corresponds to 257–269; sequence LRLTFGPQWAAEG. The helical transmembrane segment at 270 to 290 threads the bilayer; sequence VFMLFAVLFTFIGAQFIGMGL. Over 291 to 322 the chain is Cytoplasmic; sequence LGEYIGRIYTDVRARPRYFVQQVIRPSSKENE.

Belongs to the glycosyltransferase 2 family.

The protein localises to the cell inner membrane. It catalyses the reaction UDP-4-deoxy-4-formamido-beta-L-arabinose + di-trans,octa-cis-undecaprenyl phosphate = 4-deoxy-4-formamido-alpha-L-arabinopyranosyl di-trans,octa-cis-undecaprenyl phosphate + UDP. It participates in glycolipid biosynthesis; 4-amino-4-deoxy-alpha-L-arabinose undecaprenyl phosphate biosynthesis; 4-amino-4-deoxy-alpha-L-arabinose undecaprenyl phosphate from UDP-4-deoxy-4-formamido-beta-L-arabinose and undecaprenyl phosphate: step 1/2. The protein operates within bacterial outer membrane biogenesis; lipopolysaccharide biosynthesis. Catalyzes the transfer of 4-deoxy-4-formamido-L-arabinose from UDP to undecaprenyl phosphate. The modified arabinose is attached to lipid A and is required for resistance to polymyxin and cationic antimicrobial peptides. The protein is Undecaprenyl-phosphate 4-deoxy-4-formamido-L-arabinose transferase of Shigella dysenteriae serotype 1 (strain Sd197).